Consider the following 111-residue polypeptide: High mobility group protein Z (111 aa).

The HMG box DNA-binding region spans 6–72; sequence PKRPLSAYML…EYNKAVKEYE (67 aa). Residue S11 is modified to Phosphoserine. The tract at residues 72–111 is disordered; the sequence is EANGGTDSGAPKKRKKAAAKPAKKAKKKESSEEEEEDESE. Over residues 82-98 the composition is skewed to basic residues; sequence PKKRKKAAAKPAKKAKK. Residues 102–111 show a composition bias toward acidic residues; sequence SEEEEEDESE.

Belongs to the HMGB family.

The protein localises to the nucleus. Its subcellular location is the chromosome. This chain is High mobility group protein Z (HmgZ), found in Drosophila melanogaster (Fruit fly).